Reading from the N-terminus, the 560-residue chain is Oxygen-dependent choline dehydrogenase (560 aa).

8-37 (DYIIIGAGSAGNVLATRLTEDADVSVLLLE) contributes to the FAD binding site. The active-site Proton acceptor is His-475.

Belongs to the GMC oxidoreductase family. FAD is required as a cofactor.

It catalyses the reaction choline + A = betaine aldehyde + AH2. The enzyme catalyses betaine aldehyde + NAD(+) + H2O = glycine betaine + NADH + 2 H(+). The protein operates within amine and polyamine biosynthesis; betaine biosynthesis via choline pathway; betaine aldehyde from choline (cytochrome c reductase route): step 1/1. Involved in the biosynthesis of the osmoprotectant glycine betaine. Catalyzes the oxidation of choline to betaine aldehyde and betaine aldehyde to glycine betaine at the same rate. In Stenotrophomonas maltophilia (strain K279a), this protein is Oxygen-dependent choline dehydrogenase.